Consider the following 426-residue polypeptide: 3-phosphoshikimate 1-carboxyvinyltransferase (426 aa).

Residues lysine 22, serine 23, and arginine 27 each contribute to the 3-phosphoshikimate site. Lysine 22 is a phosphoenolpyruvate binding site. Phosphoenolpyruvate-binding residues include glycine 96 and arginine 124. Serine 170, serine 171, glutamine 172, serine 198, aspartate 314, asparagine 337, and lysine 341 together coordinate 3-phosphoshikimate. Residue glutamine 172 participates in phosphoenolpyruvate binding. The Proton acceptor role is filled by aspartate 314. Residues arginine 345, arginine 387, and lysine 412 each coordinate phosphoenolpyruvate.

It belongs to the EPSP synthase family. As to quaternary structure, monomer.

The protein localises to the cytoplasm. It catalyses the reaction 3-phosphoshikimate + phosphoenolpyruvate = 5-O-(1-carboxyvinyl)-3-phosphoshikimate + phosphate. It functions in the pathway metabolic intermediate biosynthesis; chorismate biosynthesis; chorismate from D-erythrose 4-phosphate and phosphoenolpyruvate: step 6/7. Functionally, catalyzes the transfer of the enolpyruvyl moiety of phosphoenolpyruvate (PEP) to the 5-hydroxyl of shikimate-3-phosphate (S3P) to produce enolpyruvyl shikimate-3-phosphate and inorganic phosphate. The sequence is that of 3-phosphoshikimate 1-carboxyvinyltransferase from Shewanella oneidensis (strain ATCC 700550 / JCM 31522 / CIP 106686 / LMG 19005 / NCIMB 14063 / MR-1).